The chain runs to 522 residues: 4-chlorobenzoate--CoA ligase (522 aa).

ATP-binding positions include 161 to 169, 300 to 305, and Asn410; these read TSGTTGLPK and DIYGTT.

This sequence belongs to the ATP-dependent AMP-binding enzyme family. As to quaternary structure, homodimer. Mg(2+) serves as cofactor.

It carries out the reaction 4-chlorobenzoate + ATP + CoA = 4-chlorobenzoyl-CoA + AMP + diphosphate. The protein operates within xenobiotic degradation; 4-chlorobenzoate degradation; 4-hydroxybenzoate from 4-chlorobenzoate: step 2/3. In terms of biological role, catalyzes the formation of chlorobenzoyl-CoA via a 2 step reaction. First 4-chlorobenzoate is adenylated by ATP, followed by acyl transfer from the 4-chlorobenzoyl-AMP intermediate to CoA. Benzoate, 4-bromobenzoate, 4-iodobenzoate and 4-fluorobenzoate also act as substrates. Inactive towards 4-nitrobenzoate. In Arthrobacter sp, this protein is 4-chlorobenzoate--CoA ligase.